Consider the following 429-residue polypeptide: Serine--tRNA ligase (429 aa).

235-237 lines the L-serine pocket; it reads TAE. ATP is bound at residue 266-268; it reads RSE. Glu-289 serves as a coordination point for L-serine. 353-356 provides a ligand contact to ATP; that stretch reads EISS. Ser-389 lines the L-serine pocket.

It belongs to the class-II aminoacyl-tRNA synthetase family. Type-1 seryl-tRNA synthetase subfamily. As to quaternary structure, homodimer. The tRNA molecule binds across the dimer.

Its subcellular location is the cytoplasm. The enzyme catalyses tRNA(Ser) + L-serine + ATP = L-seryl-tRNA(Ser) + AMP + diphosphate + H(+). The catalysed reaction is tRNA(Sec) + L-serine + ATP = L-seryl-tRNA(Sec) + AMP + diphosphate + H(+). It participates in aminoacyl-tRNA biosynthesis; selenocysteinyl-tRNA(Sec) biosynthesis; L-seryl-tRNA(Sec) from L-serine and tRNA(Sec): step 1/1. Its function is as follows. Catalyzes the attachment of serine to tRNA(Ser). Is also able to aminoacylate tRNA(Sec) with serine, to form the misacylated tRNA L-seryl-tRNA(Sec), which will be further converted into selenocysteinyl-tRNA(Sec). This Histophilus somni (strain 2336) (Haemophilus somnus) protein is Serine--tRNA ligase.